Reading from the N-terminus, the 457-residue chain is Protein translocase subunit SecY (457 aa).

Residues 1–20 (MGVIDVLAAVGERFPAVRKP) are Cytoplasmic-facing. The helical transmembrane segment at 21 to 47 (ERKPTLYRRLAWTGVILVLYFIMSNIP) threads the bilayer. The Extracellular segment spans residues 48–59 (LYGIPPQNIGGQ). Residues 60 to 67 (VDLQRIIF) constitute an intramembrane region (helical). Residues 60–88 (VDLQRIIFASSAGTLMELGIGPIVTASLI) traverse the membrane as a discontinuously helical segment. Residues 68–79 (ASSAGTLMELGI) lie within the membrane without spanning it. The helical intramembrane region spans 80–88 (GPIVTASLI). At 89–109 (IQVLVGAKIIKLDLADPEGRR) the chain is on the cytoplasmic side. A helical membrane pass occupies residues 110–134 (KFTSAQKVLALAFAALEAVAFTVGG). Over 135–146 (RYWVGTAIEPGP) the chain is Extracellular. A helical transmembrane segment spans residues 147–171 (LDYALVSLQLFLGALLVIYFDEVMQ). The Cytoplasmic portion of the chain corresponds to 172–178 (KGWGIGS). A helical transmembrane segment spans residues 179–197 (AISLFILAGVAQGVVWSIF). The Extracellular portion of the chain corresponds to 198 to 229 (GTIPGVAQDYGLVPAIISNPDLTLLARPNGFP). The chain crosses the membrane as a helical span at residues 230–251 (DLTGFFTTLAAIILLVYLQAMR). Topologically, residues 252–276 (VEIPITSERFKGIRSRVPLQFIYVT) are cytoplasmic. A helical membrane pass occupies residues 277–298 (NIPILLVGILVSDLLLVQRLLA). The Extracellular portion of the chain corresponds to 299–332 (DYLGVESRAYQIYSSIVYYLSPPRGVVQSIADPV). Residues 333–352 (KTAVFIASWTVLSIVFGYMW) form a helical membrane-spanning segment. Topologically, residues 353–395 (VEIAGLNPREQAERLIKGGLAIPGMRSDPRVLERVLRRYIYPL) are cytoplasmic. Residues 396-414 (TFLSSLIVAALVIVADIFG) traverse the membrane as a helical segment. The Extracellular portion of the chain corresponds to 415–417 (AYG). Residues 418-432 (TGTGLLLAVGIINQY) form a helical membrane-spanning segment. Topologically, residues 433–457 (YAMITRERALETYPLLRRILGEEVV) are cytoplasmic.

It belongs to the SecY/SEC61-alpha family. As to quaternary structure, component of the Sec protein translocase complex. Heterotrimer consisting of alpha (SecY), beta (SecG) and gamma (SecE) subunits. The heterotrimers can form oligomers, although 1 heterotrimer is thought to be able to translocate proteins. Interacts with the ribosome. May interact with SecDF, and other proteins may be involved.

The protein resides in the cell membrane. Functionally, the central subunit of the protein translocation channel SecYEG. Consists of two halves formed by TMs 1-5 and 6-10. These two domains form a lateral gate at the front which open onto the bilayer between TMs 2 and 7, and are clamped together by SecE at the back. The channel is closed by both a pore ring composed of hydrophobic SecY resides and a short helix (helix 2A) on the extracellular side of the membrane which forms a plug. The plug probably moves laterally to allow the channel to open. The ring and the pore may move independently. The chain is Protein translocase subunit SecY from Aeropyrum pernix (strain ATCC 700893 / DSM 11879 / JCM 9820 / NBRC 100138 / K1).